The chain runs to 391 residues: Probable methanogen homoaconitase large subunit (391 aa).

[4Fe-4S] cluster-binding residues include Cys275, Cys333, and Cys336.

It belongs to the aconitase/IPM isomerase family. LeuC type 2 subfamily. In terms of assembly, heterotetramer of 2 HacA and 2 HacB proteins.

It catalyses the reaction (2R)-homocitrate = (2R,3S)-homoisocitrate. It carries out the reaction (2R)-homocitrate = cis-homoaconitate + H2O. The catalysed reaction is (2R,3S)-homoisocitrate = cis-homoaconitate + H2O. The enzyme catalyses cis-(homo)2aconitate + H2O = (2R,3S)-iso(homo)2citrate. It catalyses the reaction cis-(homo)3aconitate + H2O = (2R,3S)-iso(homo)3citrate. Its pathway is organic acid metabolism; 2-oxosuberate biosynthesis. Its function is as follows. Component of a hydro-lyase with broad substrate specificity for cis-unsaturated tricarboxylic acids. Catalyzes both the reversible dehydration of (R)-homocitrate ((R)-2-hydroxybutane-1,2,4-tricarboxylate) to produce cis-homoaconitate ((Z)-but-1-ene-1,2,4-tricarboxylate), and its hydration to homoisocitrate ((1R,2S)-1-hydroxybutane-1,2,4-tricarboxylate). Is also able to hydrate the analogous longer chain substrates cis-homo(2)-aconitate, cis-homo(3)-aconitate. These reactions are part of the biosynthesis pathway of coenzyme B. This Methanosarcina mazei (strain ATCC BAA-159 / DSM 3647 / Goe1 / Go1 / JCM 11833 / OCM 88) (Methanosarcina frisia) protein is Probable methanogen homoaconitase large subunit (hacA).